A 346-amino-acid chain; its full sequence is Annexin A1 (346 aa).

Ala-2 is modified (N-acetylalanine). The residue at position 5 (Ser-5) is a Phosphoserine; by TRPM7. Gln-19 participates in a covalent cross-link: Isoglutamyl lysine isopeptide (Gln-Lys) (interchain with K-?). Position 21 is a phosphotyrosine; by EGFR (Tyr-21). The disordered stretch occupies residues Val-25–Asp-47. Ser-34 and Ser-37 each carry phosphoserine. Residue Thr-41 is modified to Phosphothreonine. Annexin repeat units follow at residues Phe-42–Lys-113, Thr-114–Lys-185, Asp-197–Lys-269, and Ser-273–Gly-344. N6-acetyllysine is present on Lys-58. Residues Gly-59, Val-60, Glu-62, Lys-97, Leu-100, Glu-105, Met-127, Gly-129, Gly-131, Thr-132, and Glu-134 each contribute to the Ca(2+) site. Thr-136 is modified (phosphothreonine). Residues Asp-171, Gly-210, and Arg-213 each contribute to the Ca(2+) site. Lys-214 participates in a covalent cross-link: Glycyl lysine isopeptide (Lys-Gly) (interchain with G-Cter in SUMO1); alternate. A Glycyl lysine isopeptide (Lys-Gly) (interchain with G-Cter in SUMO2); alternate cross-link involves residue Lys-214. Residue Gly-215 coordinates Ca(2+). Lys-239 is subject to N6-acetyllysine. Ca(2+)-binding residues include Asp-253, Glu-255, and Leu-256. Lys-257 is covalently cross-linked (Glycyl lysine isopeptide (Lys-Gly) (interchain with G-Cter in SUMO1)). Residues Glu-261, Met-286, Gly-288, and Gly-290 each contribute to the Ca(2+) site. Lys-312 bears the N6-acetyllysine mark. A disulfide bridge connects residues Cys-324 and Cys-343. Residues Leu-328, Glu-330, and Thr-331 each coordinate Ca(2+). Lys-332 participates in a covalent cross-link: Glycyl lysine isopeptide (Lys-Gly) (interchain with G-Cter in SUMO1). Glu-336 is a binding site for Ca(2+).

Belongs to the annexin family. As to quaternary structure, homodimer; non-covalently linked. Homodimer; linked by transglutamylation. Homodimers linked by transglutamylation are observed in placenta, but not in other tissues. Interacts with S100A11. Heterotetramer, formed by two molecules each of S100A11 and ANXA1. Interacts with DYSF. Interacts with EGFR. In terms of processing, phosphorylated by EGFR. Phosphorylated by protein kinase C and TRPM7. Phosphorylated in response to EGF treatment. Sumoylated. Post-translationally, proteolytically cleaved by cathepsin CTSG to release the active N-terminal peptide Ac2-26. Detected in lung and spleen (at protein level).

It localises to the nucleus. It is found in the cytoplasm. The protein localises to the cell projection. Its subcellular location is the cilium. The protein resides in the basolateral cell membrane. It localises to the lateral cell membrane. It is found in the early endosome. The protein localises to the cell membrane. Its subcellular location is the cytoplasmic vesicle membrane. The protein resides in the apical cell membrane. It localises to the membrane. It is found in the endosome. The protein localises to the secreted. Its subcellular location is the extracellular space. The protein resides in the extracellular exosome. It localises to the cytoplasmic vesicle. It is found in the secretory vesicle lumen. The protein localises to the phagocytic cup. Functionally, plays important roles in the innate immune response as effector of glucocorticoid-mediated responses and regulator of the inflammatory process. Has anti-inflammatory activity. Plays a role in glucocorticoid-mediated down-regulation of the early phase of the inflammatory response. Contributes to the adaptive immune response by enhancing signaling cascades that are triggered by T-cell activation, regulates differentiation and proliferation of activated T-cells. Promotes the differentiation of T-cells into Th1 cells and negatively regulates differentiation into Th2 cells. Has no effect on unstimulated T-cells. Negatively regulates hormone exocytosis via activation of the formyl peptide receptors and reorganization of the actin cytoskeleton. Has high affinity for Ca(2+) and can bind up to eight Ca(2+) ions. Displays Ca(2+)-dependent binding to phospholipid membranes. Plays a role in the formation of phagocytic cups and phagosomes. Plays a role in phagocytosis by mediating the Ca(2+)-dependent interaction between phagosomes and the actin cytoskeleton. Functions at least in part by activating the formyl peptide receptors and downstream signaling cascades. Promotes chemotaxis of granulocytes and monocytes via activation of the formyl peptide receptors. Promotes rearrangement of the actin cytoskeleton, cell polarization and cell migration. Promotes resolution of inflammation and wound healing. Acts via neutrophil N-formyl peptide receptors to enhance the release of CXCL2. The sequence is that of Annexin A1 (ANXA1) from Sus scrofa (Pig).